Here is a 279-residue protein sequence, read N- to C-terminus: Urease accessory protein UreD (279 aa).

The protein belongs to the UreD family. As to quaternary structure, ureD, UreF and UreG form a complex that acts as a GTP-hydrolysis-dependent molecular chaperone, activating the urease apoprotein by helping to assemble the nickel containing metallocenter of UreC. The UreE protein probably delivers the nickel.

It localises to the cytoplasm. Its function is as follows. Required for maturation of urease via the functional incorporation of the urease nickel metallocenter. The protein is Urease accessory protein UreD of Trichodesmium erythraeum (strain IMS101).